The sequence spans 610 residues: Dapper homolog 3 (610 aa).

Ser-6 bears the Phosphoserine mark. Disordered stretches follow at residues 50–76, 102–179, and 200–579; these read PGMG…RRAA, LESG…SVGA, and TCSS…PAGP. A compositionally biased stretch (acidic residues) spans 56–69; that stretch reads EAEDEEDAEEDEDA. Positions 63 to 87 form a coiled coil; the sequence is AEEDEDAAAARRAAAALEEQLEALP. Over residues 120-138 the composition is skewed to low complexity; the sequence is DPSSTGGPDSPPSTFCGDS. Phosphoserine is present on residues Ser-165 and Ser-237. An Omega-N-methylarginine modification is found at Arg-255. Positions 317 to 331 are enriched in pro residues; it reads PPEPAPPAAASPPSS. Over residues 344-356 the composition is skewed to low complexity; the sequence is PGAPAASRGLPGR. Phosphoserine is present on residues Ser-409 and Ser-456. Over residues 475–485 the composition is skewed to pro residues; the sequence is PRGPAPSPSAP. Low complexity predominate over residues 524–545; it reads ESESSASEGESPAFSSASSDSD. Over residues 566 to 576 the composition is skewed to gly residues; it reads GPGGAAGGGTP. The PDZ-binding signature appears at 607-610; that stretch reads MTTV.

This sequence belongs to the dapper family. As to quaternary structure, can form homodimers and heterodimers with DACT1 or DACT3. Interacts with CSNK1D, PKA catalytic subunit, PKC-type kinase, DVL1, DVL2, DVL3, VANGL1, VANGL2 and CTNND1. In terms of tissue distribution, expressed in brain and uterus.

In terms of biological role, may be involved in regulation of intracellular signaling pathways during development. Specifically thought to play a role in canonical and/or non-canonical Wnt signaling pathways through interaction with DSH (Dishevelled) family proteins. The protein is Dapper homolog 3 (Dact3) of Mus musculus (Mouse).